The chain runs to 575 residues: Alpha-(1,6)-fucosyltransferase (575 aa).

The Cytoplasmic portion of the chain corresponds to 1 to 9 (MRAWTGSWR). The helical; Signal-anchor for type II membrane protein transmembrane segment at 10-30 (WIMLILFAWGTLLFYIGGHLV) threads the bilayer. The Lumenal portion of the chain corresponds to 31–575 (RDNDHPDHSS…KYPTYPEAEK (545 aa)). 3 disulfide bridges follow: cysteine 204-cysteine 266, cysteine 212-cysteine 230, and cysteine 218-cysteine 222. A GT23 domain is found at 206 to 493 (KARKLVCNIN…PDASANFHSL (288 aa)). Position 278 is a phosphoserine (serine 278). The SH3-binding signature appears at 299 to 305 (PRPPYLP). Residues 365–366 (RR) are important for donor substrate binding. A disulfide bridge links cysteine 465 with cysteine 472. The 62-residue stretch at 502–563 (QNAHNQIAVY…PSYKVREKIE (62 aa)) folds into the SH3 domain.

This sequence belongs to the glycosyltransferase 23 family. In terms of processing, tyrosine phosphorylated by PKDCC/VLK.

The protein localises to the golgi apparatus. It localises to the golgi stack membrane. It carries out the reaction N(4)-{beta-D-GlcNAc-(1-&gt;2)-alpha-D-Man-(1-&gt;3)-[beta-D-GlcNAc-(1-&gt;2)-alpha-D-Man-(1-&gt;6)]-beta-D-Man-(1-&gt;4)-beta-D-GlcNAc-(1-&gt;4)-beta-D-GlcNAc}-L-asparaginyl-[protein] + GDP-beta-L-fucose = an N(4)-{beta-D-GlcNAc-(1-&gt;2)-alpha-D-Man-(1-&gt;3)-[beta-D-GlcNAc-(1-&gt;2)-alpha-D-Man-(1-&gt;6)]-beta-D-Man-(1-&gt;4)-beta-D-GlcNAc-(1-&gt;4)-[alpha-L-Fuc-(1-&gt;6)]-beta-D-GlcNAc}-L-asparaginyl-[protein] + GDP + H(+). It participates in protein modification; protein glycosylation. Its function is as follows. Catalyzes the addition of fucose in alpha 1-6 linkage to the first GlcNAc residue, next to the peptide chains in N-glycans. The protein is Alpha-(1,6)-fucosyltransferase (Fut8) of Rattus norvegicus (Rat).